The chain runs to 123 residues: Methylmalonyl-CoA carboxyltransferase 1.3S subunit (123 aa).

The Biotinyl-binding domain maps to 46-123; sequence GAGAGKAGEG…QGGQGLIKIG (78 aa). Residue K89 is modified to N6-biotinyllysine.

Transcarboxylase is composed of three subunits: 1.3S, 5S, and 12S. The core of the enzyme is composed of six 12S subunits. On each side of the core there are three pairs of 5S subunits. Each 5S dimer is attached to the core by two 1.3S subunits. Thus the total number of chains is 30 (6 + 12 + 12).

It carries out the reaction (S)-methylmalonyl-CoA + pyruvate = propanoyl-CoA + oxaloacetate. In terms of biological role, the biotinyl 1.3S subunit serves as a carboxyl carrier between the substrate-binding sites on the 12S and 5S subunits. This Propionibacterium freudenreichii subsp. shermanii protein is Methylmalonyl-CoA carboxyltransferase 1.3S subunit.